We begin with the raw amino-acid sequence, 125 residues long: Large ribosomal subunit protein bL12 (125 aa).

This sequence belongs to the bacterial ribosomal protein bL12 family. As to quaternary structure, homodimer. Part of the ribosomal stalk of the 50S ribosomal subunit. Forms a multimeric L10(L12)X complex, where L10 forms an elongated spine to which 2 to 4 L12 dimers bind in a sequential fashion. Binds GTP-bound translation factors.

In terms of biological role, forms part of the ribosomal stalk which helps the ribosome interact with GTP-bound translation factors. Is thus essential for accurate translation. In Thermoanaerobacter sp. (strain X514), this protein is Large ribosomal subunit protein bL12.